Consider the following 23-residue polypeptide: Phospholipase A2 homolog 4 (23 aa).

Belongs to the phospholipase A2 family. Group II subfamily. K49 sub-subfamily. Homodimer; non-covalently linked (probable alternative/compact dimer conformation in solution). As to expression, expressed by the venom gland.

Its subcellular location is the secreted. In terms of biological role, snake venom phospholipase A2 homolog that lacks enzymatic activity. Induces acute muscle damage after intramuscular injection in mice and disrupts negatively charged liposomes but not positively charged ones. Also exerts a weak anticoagulant effect only at concentrations of 40 ug/ml or higher. A model of myotoxic mechanism has been proposed: an apo Lys49-PLA2 is activated by the entrance of a hydrophobic molecule (e.g. fatty acid) at the hydrophobic channel of the protein leading to a reorientation of a monomer. This reorientation causes a transition between 'inactive' to 'active' states, causing alignment of C-terminal and membrane-docking sites (MDoS) side-by-side and putting the membrane-disruption sites (MDiS) in the same plane, exposed to solvent and in a symmetric position for both monomers. The MDoS region stabilizes the toxin on membrane by the interaction of charged residues with phospholipid head groups. Subsequently, the MDiS region destabilizes the membrane with penetration of hydrophobic residues. This insertion causes a disorganization of the membrane, allowing an uncontrolled influx of ions (i.e. calcium and sodium), and eventually triggering irreversible intracellular alterations and cell death. This is Phospholipase A2 homolog 4 from Bothrops asper (Terciopelo).